We begin with the raw amino-acid sequence, 435 residues long: Putative dimethyl sulfoxide reductase membrane subunit C (435 aa).

A run of 11 helical transmembrane segments spans residues 22–42 (GWLG…AYQL), 57–77 (WGLY…GLIL), 95–115 (LGVL…LPDI), 135–155 (VWDF…LWLL), 186–206 (FWTA…TGWI), 220–240 (LVAP…LLVV), 257–277 (LTSL…YLLA), 281–301 (LPHA…FLIG), 304–324 (VYFW…LATP), 333–353 (IFTA…RLVF), and 392–412 (VEIA…MAGL).

It belongs to the NrfD family. As to quaternary structure, probable multiprotein complex that likely consists of DmsA, DmsB and DmsC.

It localises to the cell membrane. Functionally, dimethyl sulfoxide (DMSO) reductase catalyzes the reduction of dimethyl sulfoxide (DMSO) to dimethyl sulfide (DMS) during anaerobic respiration; it can also use trimethylamine N-oxide (TMAO) as terminal electron acceptor. Subunit C is proposed to be a membrane anchoring subunit. This is Putative dimethyl sulfoxide reductase membrane subunit C (dmsC) from Halobacterium salinarum (strain ATCC 700922 / JCM 11081 / NRC-1) (Halobacterium halobium).